The chain runs to 204 residues: Pro-glucagon (204 aa).

Positions M1–Q20 are cleaved as a signal peptide. A propeptide spanning residues S84–H109 is cleaved from the precursor. The residue at position 145 (R145) is an Arginine amide. 2 propeptides span residues D149–G161 and R197–Q204.

Belongs to the glucagon family. As to expression, isoform LPII is expressed in both pancreas and intestine. Expression of isoform LPI is restricted to the pancreas. Neither isoform is detected in salivary glands.

It is found in the secreted. Functionally, plays a key role in glucose metabolism and homeostasis. Regulates blood glucose by increasing gluconeogenesis and decreasing glycolysis. Its function is as follows. Potent stimulator of glucose-dependent insulin release. Plays important roles on gastric motility and the suppression of plasma glucagon levels. In terms of biological role, stimulates intestinal growth and up-regulates villus height in the small intestine, concomitant with increased crypt cell proliferation and decreased enterocyte apoptosis. The sequence is that of Pro-glucagon (GCG) from Heloderma suspectum (Gila monster).